The chain runs to 444 residues: Chitinase-like protein Idgf1 (444 aa).

A signal peptide spans 1-20 (MTSLLFVILNIILTLHLCAG). The region spanning 29 to 444 (KRLICYYDAQ…PILRSVRGHL (416 aa)) is the GH18 domain. Cys-33 and Cys-60 form a disulfide bridge. N-linked (GlcNAc...) asparagine glycosylation is found at Asn-213, Asn-225, and Asn-335. A disulfide bridge links Cys-346 with Cys-429.

This sequence belongs to the glycosyl hydrolase 18 family. IDGF subfamily. Glycosylated.

The protein localises to the secreted. In terms of biological role, cooperates with insulin-like peptides to stimulate the proliferation, polarization and motility of imaginal disk cells. May act by stabilizing the binding of insulin-like peptides to its receptor through a simultaneous interaction with both molecules to form a multiprotein signaling complex. This chain is Chitinase-like protein Idgf1 (Idgf1), found in Glossina morsitans morsitans (Savannah tsetse fly).